A 245-amino-acid polypeptide reads, in one-letter code: 23S rRNA (guanosine-2'-O-)-methyltransferase RlmB (245 aa).

S-adenosyl-L-methionine is bound by residues Gly197, Ile217, and Leu226.

Belongs to the class IV-like SAM-binding methyltransferase superfamily. RNA methyltransferase TrmH family. RlmB subfamily.

The protein localises to the cytoplasm. The enzyme catalyses guanosine(2251) in 23S rRNA + S-adenosyl-L-methionine = 2'-O-methylguanosine(2251) in 23S rRNA + S-adenosyl-L-homocysteine + H(+). In terms of biological role, specifically methylates the ribose of guanosine 2251 in 23S rRNA. This is 23S rRNA (guanosine-2'-O-)-methyltransferase RlmB from Pasteurella multocida (strain Pm70).